The chain runs to 243 residues: Probable heat shock transcription factor (243 aa).

Residues isoleucine 9–arginine 102 mediate DNA binding. The interval glutamine 121–isoleucine 164 is involved in trimerization.

This sequence belongs to the HSF family. Homotrimer. Homotrimerization increases the affinity of HSF1 to DNA.

It is found in the nucleus. DNA-binding transcription factor that specifically binds heat shock promoter elements (HSE) and activates transcription. This is Probable heat shock transcription factor from Vairimorpha ceranae (strain BRL01) (Microsporidian parasite).